Reading from the N-terminus, the 198-residue chain is Ribonuclease HII (198 aa).

The 189-residue stretch at 10-198 (QLVAGVDEVG…PVKRALGLAS (189 aa)) folds into the RNase H type-2 domain. 3 residues coordinate a divalent metal cation: aspartate 16, glutamate 17, and aspartate 108.

This sequence belongs to the RNase HII family. The cofactor is Mn(2+). It depends on Mg(2+) as a cofactor.

It is found in the cytoplasm. The catalysed reaction is Endonucleolytic cleavage to 5'-phosphomonoester.. In terms of biological role, endonuclease that specifically degrades the RNA of RNA-DNA hybrids. The polypeptide is Ribonuclease HII (Shigella sonnei (strain Ss046)).